The sequence spans 225 residues: Ras-related protein Rab-21 (225 aa).

A2 is modified (N-acetylalanine). The GTP site is built by G28, G31, K32, T33, S34, N45, D46, H48, T50, and T51. T33 is a binding site for Mg(2+). Residues 43-56 (KFNDKHITTLQASF) carry the Switch 1 motif. T51 and D74 together coordinate Mg(2+). Residues 76-94 (AGQERFHALGPIYYRDSNG) carry the Switch 2 motif. The GTP site is built by G77, N132, K133, D135, A163, and K164. Residues 188–225 (ERAKGNGSSQPGTARRGVQIIDDEPQAQTSGGGCCSSG) are disordered. S-geranylgeranyl cysteine attachment occurs at residues C221 and C222. The residue at position 222 (C222) is a Cysteine methyl ester. Residues 223–225 (SSG) constitute a propeptide, removed in mature form.

The protein belongs to the small GTPase superfamily. Rab family. Interacts with the cytoplasmic tail of integrins ITGA1, ITGA2, ITGA5, ITGA6, ITGA11 and ITGB1. Interacts with RABGEF1 (via VPS9 domain). Interacts with ANKRD27. Interacts with VAMP7. Interacts (in GTP-bound form) with VAMP8 in response to starvation; the interaction probably regulates VAMP8 endolysosomal trafficking. Interacts (active GTP-bound form) with TMED10; the interaction is indirect and regulates TMED10 abundance and localization at the Golgi. Requires Mg(2+) as cofactor. As to expression, widely expressed. In jejunal tissue, predominantly expressed in the apical region of the epithelial cell layer of the villi, weak expression, if any, in the crypt epithelium. Capillary endothelium and some cell types in the lamina propria also show expression.

It is found in the endoplasmic reticulum membrane. Its subcellular location is the golgi apparatus. The protein localises to the trans-Golgi network. It localises to the golgi apparatus membrane. The protein resides in the early endosome membrane. It is found in the cytoplasmic vesicle membrane. Its subcellular location is the cleavage furrow. The protein localises to the cell projection. It localises to the neuron projection. The catalysed reaction is GTP + H2O = GDP + phosphate + H(+). Regulated by guanine nucleotide exchange factors (GEFs) including ANKRD27 and RABGEF1, which promote the exchange of bound GDP for free GTP. Regulated by GTPase activating proteins (GAPs) which increase the GTP hydrolysis activity. Inhibited by GDP dissociation inhibitors (GDIs). The small GTPases Rab are key regulators of intracellular membrane trafficking, from the formation of transport vesicles to their fusion with membranes. Rabs cycle between an inactive GDP-bound form and an active GTP-bound form that is able to recruit to membranes different sets of downstream effectors directly responsible for vesicle formation, movement, tethering and fusion. RAB21 is involved in membrane trafficking control. During the mitosis of adherent cells, controls the endosomal trafficking of integrins which is required for the successful completion of cytokinesis. Regulates integrin internalization and recycling, but does not influence the traffic of endosomally translocated receptors in general. As a result, may regulate cell adhesion and migration. Involved in neurite growth. Following SBF2/MTMT13-mediated activation in response to starvation-induced autophagy, binds to and regulates SNARE protein VAMP8 endolysosomal transport required for SNARE-mediated autophagosome-lysosome fusion. Modulates protein levels of the cargo receptors TMED2 and TMED10, and required for appropriate Golgi localization of TMED10. The sequence is that of Ras-related protein Rab-21 from Homo sapiens (Human).